Here is a 355-residue protein sequence, read N- to C-terminus: MGRFSEDSADEPDEREMSAALTVGEGDIDASLRPRSLGEFIGQPRVREQLQLVLEGAKNRGGTPDHILLSGPPGLGKTSLAMIIAAELGSSLRVTSGPALERAGDLAAMLSNLVEHDVLFIDEIHRIARPAEEMLYLAMEDFRVDVVVGKGPGATSIPLEVAPFTLVGATTRSGALTGPLRDRFGFTAHMDFYEPSELERVLARSAGILGIELGAEAGAEIARRSRGTPRIANRLLRRVRDYAEVRADGVITRDIAKYALEVYDVDELGLDRLDRAVLSALTRSFGGGPVGVSTLAVAVGEEATTVEEVCEPFLVRAGMIARTPRGRVATAQAWTHLGMKPPANAVGLGQTGLFD.

Positions 1-193 (MGRFSEDSAD…FGFTAHMDFY (193 aa)) are large ATPase domain (RuvB-L). ATP-binding positions include L32, R33, G74, K77, T78, S79, 140 to 142 (EDF), R183, Y193, and R230. T78 serves as a coordination point for Mg(2+). Residues 194–264 (EPSELERVLA…IAKYALEVYD (71 aa)) form a small ATPAse domain (RuvB-S) region. The segment at 267-355 (ELGLDRLDRA…VGLGQTGLFD (89 aa)) is head domain (RuvB-H). The DNA site is built by R322 and R327.

This sequence belongs to the RuvB family. As to quaternary structure, homohexamer. Forms an RuvA(8)-RuvB(12)-Holliday junction (HJ) complex. HJ DNA is sandwiched between 2 RuvA tetramers; dsDNA enters through RuvA and exits via RuvB. An RuvB hexamer assembles on each DNA strand where it exits the tetramer. Each RuvB hexamer is contacted by two RuvA subunits (via domain III) on 2 adjacent RuvB subunits; this complex drives branch migration. In the full resolvosome a probable DNA-RuvA(4)-RuvB(12)-RuvC(2) complex forms which resolves the HJ.

Its subcellular location is the cytoplasm. The catalysed reaction is ATP + H2O = ADP + phosphate + H(+). In terms of biological role, the RuvA-RuvB-RuvC complex processes Holliday junction (HJ) DNA during genetic recombination and DNA repair, while the RuvA-RuvB complex plays an important role in the rescue of blocked DNA replication forks via replication fork reversal (RFR). RuvA specifically binds to HJ cruciform DNA, conferring on it an open structure. The RuvB hexamer acts as an ATP-dependent pump, pulling dsDNA into and through the RuvAB complex. RuvB forms 2 homohexamers on either side of HJ DNA bound by 1 or 2 RuvA tetramers; 4 subunits per hexamer contact DNA at a time. Coordinated motions by a converter formed by DNA-disengaged RuvB subunits stimulates ATP hydrolysis and nucleotide exchange. Immobilization of the converter enables RuvB to convert the ATP-contained energy into a lever motion, pulling 2 nucleotides of DNA out of the RuvA tetramer per ATP hydrolyzed, thus driving DNA branch migration. The RuvB motors rotate together with the DNA substrate, which together with the progressing nucleotide cycle form the mechanistic basis for DNA recombination by continuous HJ branch migration. Branch migration allows RuvC to scan DNA until it finds its consensus sequence, where it cleaves and resolves cruciform DNA. The protein is Holliday junction branch migration complex subunit RuvB of Mycolicibacterium vanbaalenii (strain DSM 7251 / JCM 13017 / BCRC 16820 / KCTC 9966 / NRRL B-24157 / PYR-1) (Mycobacterium vanbaalenii).